Here is a 351-residue protein sequence, read N- to C-terminus: Uroporphyrinogen decarboxylase (351 aa).

Substrate is bound by residues 25–29 (RQAGR), D74, Y151, S206, and H325.

It belongs to the uroporphyrinogen decarboxylase family. As to quaternary structure, homodimer.

It localises to the cytoplasm. It carries out the reaction uroporphyrinogen III + 4 H(+) = coproporphyrinogen III + 4 CO2. The protein operates within porphyrin-containing compound metabolism; protoporphyrin-IX biosynthesis; coproporphyrinogen-III from 5-aminolevulinate: step 4/4. Catalyzes the decarboxylation of four acetate groups of uroporphyrinogen-III to yield coproporphyrinogen-III. The chain is Uroporphyrinogen decarboxylase from Chlorobium chlorochromatii (strain CaD3).